The following is a 450-amino-acid chain: uncharacterized protein (450 aa).

The span at Glu-387 to Lys-416 shows a compositional bias: basic and acidic residues. Positions Glu-387–Glu-439 are disordered.

This is an uncharacterized protein from Saccharomyces cerevisiae (strain ATCC 204508 / S288c) (Baker's yeast).